The primary structure comprises 920 residues: Histone-lysine N-methyltransferase, H3 lysine-4 specific (920 aa).

The 86-residue stretch at 94–179 (TQVFVSNISP…KPLSVVLDRD (86 aa)) folds into the RRM domain. Residues 205–216 (KQRFEREDESSR) show a composition bias toward basic and acidic residues. Disordered regions lie at residues 205 to 242 (KQRF…TLSN) and 448 to 485 (KRVD…YQLN). 2 stretches are compositionally biased toward polar residues: residues 233–242 (PSKNSQTLSN) and 453–462 (SKMNLSAGSK). Residues 463–476 (TKSKLQRRRRRRHE) show a composition bias toward basic residues. The short motif at 749–754 (RVNNRR) is the RxxxRR motif element. One can recognise an SET domain in the interval 781–898 (KQLHFGPSRI…HGEELTYDYK (118 aa)). Position 897 (Tyr-897) interacts with S-adenosyl-L-methionine. The region spanning 904–920 (DKIPCLCGAPTCRGYLN) is the Post-SET domain.

The protein belongs to the class V-like SAM-binding methyltransferase superfamily. Component of the Set1C/COMPASS complex composed of ash2, sdc1, set1, shg1, spp1, swd1, swd2 and swd3.

The protein localises to the nucleus. The protein resides in the chromosome. The catalysed reaction is L-lysyl(4)-[histone H3] + 3 S-adenosyl-L-methionine = N(6),N(6),N(6)-trimethyl-L-lysyl(4)-[histone H3] + 3 S-adenosyl-L-homocysteine + 3 H(+). It carries out the reaction N(6)-methyl-L-lysyl(4)-[histone H3] + S-adenosyl-L-methionine = N(6),N(6)-dimethyl-L-lysyl(4)-[histone H3] + S-adenosyl-L-homocysteine + H(+). It catalyses the reaction N(6),N(6)-dimethyl-L-lysyl(4)-[histone H3] + S-adenosyl-L-methionine = N(6),N(6),N(6)-trimethyl-L-lysyl(4)-[histone H3] + S-adenosyl-L-homocysteine + H(+). Catalytic component of the COMPASS (Set1C) complex that specifically mono-, di- and trimethylates histone H3 to form H3K4me1/2/3. Binds RNA which might negatively affect its histone methyltransferase activity. COMPASS recognizes ubiquitinated H2B on one face of the nucleosome which stimulates the methylation of H3 on the opposing face. Methylation promotes maintenance of active chromatin states at euchromatic chromosomal domains and is present throughout the cell cycle. Plays a role in telomere maintenance and DNA repair in an ATM kinase rad3-dependent pathway. Required for efficient telomeric and centromeric silencing. This is Histone-lysine N-methyltransferase, H3 lysine-4 specific from Schizosaccharomyces pombe (strain 972 / ATCC 24843) (Fission yeast).